The following is a 314-amino-acid chain: L-lactate dehydrogenase (314 aa).

NAD(+) is bound by residues Val17, Asp38, Lys43, Tyr69, and 83–84 (GA). Residues Gln86 and Arg92 each contribute to the substrate site. NAD(+) contacts are provided by residues Ser105, 122 to 124 (ASN), and Ser147. Substrate is bound at residue 124–127 (NPVD). Residue 152–155 (DSAR) participates in substrate binding. Arg157 and His172 together coordinate beta-D-fructose 1,6-bisphosphate. His179 serves as the catalytic Proton acceptor. Tyr223 carries the post-translational modification Phosphotyrosine. Residue Thr232 coordinates substrate.

The protein belongs to the LDH/MDH superfamily. LDH family. As to quaternary structure, homotetramer.

It localises to the cytoplasm. The enzyme catalyses (S)-lactate + NAD(+) = pyruvate + NADH + H(+). Its pathway is fermentation; pyruvate fermentation to lactate; (S)-lactate from pyruvate: step 1/1. Allosterically activated by fructose 1,6-bisphosphate (FBP). Its function is as follows. Catalyzes the conversion of lactate to pyruvate. In Corynebacterium glutamicum (strain R), this protein is L-lactate dehydrogenase.